We begin with the raw amino-acid sequence, 404 residues long: Probable RNA polymerase sigma-C factor (404 aa).

A Polymerase core binding motif is present at residues 193-206; the sequence is DLIQEGTLGLERAV. The H-T-H motif DNA-binding region spans 362-381; that stretch reads LSEIGRILNLSRERVRQIEA.

The protein belongs to the sigma-70 factor family.

Sigma factors are initiation factors that promote the attachment of RNA polymerase to specific initiation sites and are then released. This chain is Probable RNA polymerase sigma-C factor (sigC), found in Synechocystis sp. (strain ATCC 27184 / PCC 6803 / Kazusa).